We begin with the raw amino-acid sequence, 496 residues long: Probable CtpA-like serine protease (496 aa).

The span at 1–16 (MDDKQHTSSSDDERAE) shows a compositional bias: basic and acidic residues. The disordered stretch occupies residues 1–27 (MDDKQHTSSSDDERAEIATSNQDQETN). Residues 18–27 (ATSNQDQETN) are compositionally biased toward polar residues. The chain crosses the membrane as a helical span at residues 39–59 (FISILIGTILITAVITVVAYI). Positions 124-206 (TKSFNEGVSG…TEVTLTVQRG (83 aa)) constitute a PDZ domain. Active-site charge relay system residues include serine 329, aspartate 340, and lysine 354.

Belongs to the peptidase S41A family.

It localises to the cell membrane. This chain is Probable CtpA-like serine protease, found in Staphylococcus aureus (strain MSSA476).